A 318-amino-acid polypeptide reads, in one-letter code: tRNA pseudouridine synthase B (318 aa).

D47 serves as the catalytic Nucleophile.

The protein belongs to the pseudouridine synthase TruB family. Type 1 subfamily.

It carries out the reaction uridine(55) in tRNA = pseudouridine(55) in tRNA. Functionally, responsible for synthesis of pseudouridine from uracil-55 in the psi GC loop of transfer RNAs. In Aliivibrio salmonicida (strain LFI1238) (Vibrio salmonicida (strain LFI1238)), this protein is tRNA pseudouridine synthase B.